A 136-amino-acid polypeptide reads, in one-letter code: Large ribosomal subunit protein uL16 (136 aa).

Belongs to the universal ribosomal protein uL16 family. In terms of assembly, part of the 50S ribosomal subunit.

Its function is as follows. Binds 23S rRNA and is also seen to make contacts with the A and possibly P site tRNAs. This Photobacterium profundum (strain SS9) protein is Large ribosomal subunit protein uL16.